Reading from the N-terminus, the 967-residue chain is Isoleucine--tRNA ligase (967 aa).

A 'HIGH' region motif is present at residues 68–78 (PYANGTLHMGH). Glutamate 583 contacts L-isoleucyl-5'-AMP. The 'KMSKS' region motif lies at 624-628 (KMSKS). Position 627 (lysine 627) interacts with ATP. 4 residues coordinate Zn(2+): cysteine 937, cysteine 940, cysteine 957, and cysteine 960.

Belongs to the class-I aminoacyl-tRNA synthetase family. IleS type 1 subfamily. In terms of assembly, monomer. Requires Zn(2+) as cofactor.

It localises to the cytoplasm. It catalyses the reaction tRNA(Ile) + L-isoleucine + ATP = L-isoleucyl-tRNA(Ile) + AMP + diphosphate. Its function is as follows. Catalyzes the attachment of isoleucine to tRNA(Ile). As IleRS can inadvertently accommodate and process structurally similar amino acids such as valine, to avoid such errors it has two additional distinct tRNA(Ile)-dependent editing activities. One activity is designated as 'pretransfer' editing and involves the hydrolysis of activated Val-AMP. The other activity is designated 'posttransfer' editing and involves deacylation of mischarged Val-tRNA(Ile). This is Isoleucine--tRNA ligase from Prochlorococcus marinus (strain NATL1A).